A 242-amino-acid chain; its full sequence is Small ribosomal subunit protein uS2 (242 aa).

It belongs to the universal ribosomal protein uS2 family.

The chain is Small ribosomal subunit protein uS2 from Aeromonas hydrophila subsp. hydrophila (strain ATCC 7966 / DSM 30187 / BCRC 13018 / CCUG 14551 / JCM 1027 / KCTC 2358 / NCIMB 9240 / NCTC 8049).